The primary structure comprises 54 residues: Protein hunchback (54 aa).

C2H2-type zinc fingers lie at residues 1–3 (RKH), 9–31 (FQCD…RKFH), and 37–54 (YRCA…SFKL).

The protein belongs to the hunchback C2H2-type zinc-finger protein family.

It localises to the nucleus. In terms of biological role, gap class segmentation protein that controls development of head structures. This is Protein hunchback (hb) from Calliphora vicina (Blue blowfly).